The primary structure comprises 104 residues: Large ribosomal subunit protein bL21 (104 aa).

The protein belongs to the bacterial ribosomal protein bL21 family. As to quaternary structure, part of the 50S ribosomal subunit. Contacts protein L20.

In terms of biological role, this protein binds to 23S rRNA in the presence of protein L20. The protein is Large ribosomal subunit protein bL21 of Lactococcus lactis subsp. cremoris (strain MG1363).